An 836-amino-acid chain; its full sequence is MEMTSGSLGNGIPEAMGQNRGNIKRCLEKYIENGRRVMKLNELMDEMEIVINDVTQRRRVMEGDLGKILCFTQAVVIPPNVAFAVRGTPGNWQYVKVNSSNLSVEALSSTQYLKLKEFLFDENWANDENALEVDFGALDFTLPWLSLSSSIGNGLSFVSSKLGGRLNDNPQSLVDYLLSLEHQGEKLMMNETLNTARKLEMSLILADVFLSELPKDTPFQAFELRFKECGFEKGWGESAGRVKETMRILSEILQAPDPQNIDRFFARVPRIFNVVIFSVHGYFGQTDVLGLPDTGGQVVYILDQVKALEDELLQRINSQGLNFKPQILVVTRLIPDAKKTKCNQELEPIFGTKYSNILRIPFVTENGILRRWVSRFDIYPYLERFTKDATTKILDILEGKPDLIIGNYTDGNLVASLMANKLGITQATIAHALEKTKYEDSDIKWKEFDPKYHFSSQFTADLISMNSADFIIASTYQEIAGSKERAGQYESHMSFTVPGLYRVVSGINVFDPRFNIAAPGADDSIYFPFTAQDRRFTKFYTSIDELLYSQSENDEHIGYLVDKKKPIIFSMARLDVVKNLTGLTEWYAKNKRLRDLVNLVIVGGFFDASKSKDREEISEIKKMHSLIEKYQLKGQFRWITAQTDRTRNGELYRSIADTRGAFVQPAHYEAFGLTVIEAMSCGLVTFATNQGGPAEIIVDGVSGFHIDPSNGEESSDKIADFFEKSGMDPDYWNMFSNEGLQRINECYTWKIYANKVINMGSTYSYWRHLNKDQKLAKQRYIHSFYNLQYRNLVKTIPILSDIPEPPPLPPKPLVKPSASKGSKRTQPRLSFRLFGA.

Residues 270 to 748 (RIFNVVIFSV…GLQRINECYT (479 aa)) form a GT-B glycosyltransferase region. Residues 805 to 836 (PPPLPPKPLVKPSASKGSKRTQPRLSFRLFGA) form a disordered region.

Belongs to the glycosyltransferase 1 family. Plant sucrose synthase subfamily. In terms of tissue distribution, detected in the whole plant but more precisely confined to the vasculature in cotyledons, leaves, petals, anthers and roots. Also detected in developing siliques, young immature rosette and cauline leaves.

It localises to the secreted. The protein resides in the cell wall. It catalyses the reaction an NDP-alpha-D-glucose + D-fructose = a ribonucleoside 5'-diphosphate + sucrose + H(+). In terms of biological role, sucrose-cleaving enzyme that provides UDP-glucose and fructose for various metabolic pathways. Functions in callose synthesis at the site of phloem sieve elements. The chain is Sucrose synthase 5 (SUS5) from Arabidopsis thaliana (Mouse-ear cress).